Consider the following 685-residue polypeptide: UvrABC system protein B (685 aa).

One can recognise a Helicase ATP-binding domain in the interval glutamate 39–valine 420. Residue glycine 52 to threonine 59 coordinates ATP. Positions tyrosine 105 to isoleucine 128 match the Beta-hairpin motif. Residues glutamine 443–isoleucine 596 form the Helicase C-terminal domain. The 36-residue stretch at alanine 640–arginine 675 folds into the UVR domain.

The protein belongs to the UvrB family. As to quaternary structure, forms a heterotetramer with UvrA during the search for lesions. Interacts with UvrC in an incision complex.

The protein localises to the cytoplasm. Functionally, the UvrABC repair system catalyzes the recognition and processing of DNA lesions. A damage recognition complex composed of 2 UvrA and 2 UvrB subunits scans DNA for abnormalities. Upon binding of the UvrA(2)B(2) complex to a putative damaged site, the DNA wraps around one UvrB monomer. DNA wrap is dependent on ATP binding by UvrB and probably causes local melting of the DNA helix, facilitating insertion of UvrB beta-hairpin between the DNA strands. Then UvrB probes one DNA strand for the presence of a lesion. If a lesion is found the UvrA subunits dissociate and the UvrB-DNA preincision complex is formed. This complex is subsequently bound by UvrC and the second UvrB is released. If no lesion is found, the DNA wraps around the other UvrB subunit that will check the other stand for damage. The sequence is that of UvrABC system protein B from Aromatoleum aromaticum (strain DSM 19018 / LMG 30748 / EbN1) (Azoarcus sp. (strain EbN1)).